The primary structure comprises 110 residues: Small ribosomal subunit protein eS25 (110 aa).

Residues 1–39 (MPPKAAGGKSKQIQASKAAAKGSSGGAGRKKWSKGRSRE) form a disordered region.

Belongs to the eukaryotic ribosomal protein eS25 family.

The polypeptide is Small ribosomal subunit protein eS25 (rps25) (Dictyostelium discoideum (Social amoeba)).